A 267-amino-acid chain; its full sequence is MSFPYFISPEQAMRERSELARKGIARGKSVVALAFAGGVLFVAENPSRSLQKISELYDRVGFAAAGKFNEFDNLRRGGIQFADTRGYAYDRRDVTGRQLANVYAQTLGTIFTEQAKPYEVELCVAEVAHYGETKAPELYRITYDGSIADEPHFVVMGGTTEPITTALKNTYTENADLPDALDIAVEALRAGSAENSSNDQPVLGVASLEAAILDANKPRRAFRRLTRSTLETLLQERDSKESAESEEPIESEEGKKTGKKSDADSSD.

Residues 231–267 (ETLLQERDSKESAESEEPIESEEGKKTGKKSDADSSD) form a disordered region. 2 stretches are compositionally biased toward basic and acidic residues: residues 234–243 (LQERDSKESA) and 252–267 (EEGK…DSSD).

The protein belongs to the peptidase T1A family. In terms of assembly, the 20S proteasome core is composed of 14 alpha and 14 beta subunits that assemble into four stacked heptameric rings, resulting in a barrel-shaped structure. The two inner rings, each composed of seven catalytic beta subunits, are sandwiched by two outer rings, each composed of seven alpha subunits. The catalytic chamber with the active sites is on the inside of the barrel. Has a gated structure, the ends of the cylinder being occluded by the N-termini of the alpha-subunits. Is capped by the proteasome-associated ATPase, ARC.

The protein resides in the cytoplasm. The protein operates within protein degradation; proteasomal Pup-dependent pathway. Its activity is regulated as follows. The formation of the proteasomal ATPase ARC-20S proteasome complex, likely via the docking of the C-termini of ARC into the intersubunit pockets in the alpha-rings, may trigger opening of the gate for substrate entry. Interconversion between the open-gate and close-gate conformations leads to a dynamic regulation of the 20S proteasome proteolysis activity. Functionally, component of the proteasome core, a large protease complex with broad specificity involved in protein degradation. This is Proteasome subunit alpha from Mycobacterium ulcerans (strain Agy99).